Here is an 89-residue protein sequence, read N- to C-terminus: UPF0237 protein lin0537 (89 aa).

The ACT domain maps to V4–Q78.

This sequence belongs to the UPF0237 family.

The sequence is that of UPF0237 protein lin0537 from Listeria innocua serovar 6a (strain ATCC BAA-680 / CLIP 11262).